A 621-amino-acid chain; its full sequence is Complex I assembly factor ACAD9, mitochondrial (621 aa).

The transit peptide at 1–37 directs the protein to the mitochondrion; the sequence is MSGCGLFLRTTAAARACRGLVVSTANRRLLRTSPPVR. At lysine 41 the chain carries N6-acetyllysine. Lysine 92 is subject to N6-succinyllysine. Glutamate 426 functions as the Proton acceptor in the catalytic mechanism. A Phosphothreonine modification is found at threonine 478. Lysine 521 bears the N6-acetyllysine; alternate mark. Lysine 521 is modified (N6-succinyllysine; alternate).

This sequence belongs to the acyl-CoA dehydrogenase family. Homodimer. Interacts with NDUFAF1 and ECSIT. Part of the mitochondrial complex I assembly/MCIA complex that comprises at least the core subunits TMEM126B, NDUFAF1, ECSIT and ACAD9 and complement subunits such as COA1 and TMEM186. Interacts with TMEM70 and TMEM242. Requires FAD as cofactor. As to expression, ubiquitously expressed in most normal human tissues and cancer cell lines with high level of expression in heart, skeletal muscles, brain, kidney and liver. In the cerebellum uniquely expressed in the granular layer (at protein level).

It is found in the mitochondrion inner membrane. It carries out the reaction eicosanoyl-CoA + oxidized [electron-transfer flavoprotein] + H(+) = (2E)-eicosenoyl-CoA + reduced [electron-transfer flavoprotein]. It catalyses the reaction octadecanoyl-CoA + oxidized [electron-transfer flavoprotein] + H(+) = (2E)-octadecenoyl-CoA + reduced [electron-transfer flavoprotein]. The enzyme catalyses oxidized [electron-transfer flavoprotein] + hexadecanoyl-CoA + H(+) = (2E)-hexadecenoyl-CoA + reduced [electron-transfer flavoprotein]. The catalysed reaction is decanoyl-CoA + oxidized [electron-transfer flavoprotein] + H(+) = (2E)-decenoyl-CoA + reduced [electron-transfer flavoprotein]. It carries out the reaction nonanoyl-CoA + oxidized [electron-transfer flavoprotein] + H(+) = (2E)-nonenoyl-CoA + reduced [electron-transfer flavoprotein]. It catalyses the reaction pentadecanoyl-CoA + oxidized [electron-transfer flavoprotein] + H(+) = (2E)-pentadecenoyl-CoA + reduced [electron-transfer flavoprotein]. The enzyme catalyses undecanoyl-CoA + oxidized [electron-transfer flavoprotein] + H(+) = trans-2-undecenoyl-CoA + reduced [electron-transfer flavoprotein]. The catalysed reaction is (9Z)-hexadecenoyl-CoA + oxidized [electron-transfer flavoprotein] + H(+) = (2E,9Z)-hexadecadienoyl-CoA + reduced [electron-transfer flavoprotein]. It carries out the reaction heptadecanoyl-CoA + oxidized [electron-transfer flavoprotein] + H(+) = trans-2-heptadecenoyl-CoA + reduced [electron-transfer flavoprotein]. It catalyses the reaction (9E)-octadecenoyl-CoA + oxidized [electron-transfer flavoprotein] + H(+) = (2E,9E)-octadecadienoyl-CoA + reduced [electron-transfer flavoprotein]. The enzyme catalyses oxidized [electron-transfer flavoprotein] + (9Z)-octadecenoyl-CoA + H(+) = (2E,9Z)-octadecadienoyl-CoA + reduced [electron-transfer flavoprotein]. The catalysed reaction is (9Z,12Z)-octadecadienoyl-CoA + oxidized [electron-transfer flavoprotein] + H(+) = (2E,9Z,12Z)-octadecatrienoyl-CoA + reduced [electron-transfer flavoprotein]. It carries out the reaction (4Z,7Z,10Z,13Z,16Z,19Z)-docosahexaenoyl-CoA + oxidized [electron-transfer flavoprotein] + H(+) = (2E,4Z,7Z,10Z,13Z,16Z,19Z)-docosaheptaenoyl-CoA + reduced [electron-transfer flavoprotein]. It catalyses the reaction tetradecanoyl-CoA + oxidized [electron-transfer flavoprotein] + H(+) = (2E)-tetradecenoyl-CoA + reduced [electron-transfer flavoprotein]. In terms of biological role, as part of the MCIA complex, primarily participates in the assembly of the mitochondrial complex I and therefore plays a role in oxidative phosphorylation. This moonlighting protein also has a dehydrogenase activity toward a broad range of substrates with greater specificity for long-chain unsaturated acyl-CoAs. However, in vivo, it does not seem to play a primary role in fatty acid oxidation. In addition, the function in complex I assembly is independent of the dehydrogenase activity of the protein. The polypeptide is Complex I assembly factor ACAD9, mitochondrial (Homo sapiens (Human)).